Reading from the N-terminus, the 233-residue chain is 4'-phosphopantetheinyl transferase psf-1 (233 aa).

Mg(2+) contacts are provided by D110, E112, and E154. The interval 161–192 (GKGISYGLSSFTARLSEDGQATLRLPDHEAPC) is peptidyl carrier protein binding.

The protein belongs to the P-Pant transferase superfamily. Gsp/Sfp/HetI/AcpT family. Mg(2+) is required as a cofactor.

It carries out the reaction apo-[peptidyl-carrier protein] + CoA = holo-[peptidyl-carrier protein] + adenosine 3',5'-bisphosphate + H(+). Probably activates the peptidyl carrier protein (PCP) domains of surfactin synthetase by transferring the 4'-phosphopantetheinyl moiety of coenzyme A (CoA) to a serine residue. Required for the production of the lipopeptide antibiotic, surfactin. The sequence is that of 4'-phosphopantetheinyl transferase psf-1 (psf-1) from Bacillus pumilus (Bacillus mesentericus).